A 667-amino-acid polypeptide reads, in one-letter code: WD repeat-containing protein 48 homolog (667 aa).

8 WD repeats span residues 26–65 (QHRN…NDKY), 71–110 (HHND…CMST), 113–152 (THRD…ALTA), 164–203 (GSKD…RSMK), 206–245 (GHTE…CIQT), 248–287 (VHKE…NKML), 290–329 (EEKA…RCTL), and 349–388 (KGGA…KKEE). Residues 591–615 (ETTPSGGNANNSLQNSQSDANSEGS) are disordered.

The protein belongs to the WD repeat WDR48 family. Catalytic component of the Usp12-46 deubiquitylase complex consisting of Usp12-46, Wdr20 and Uaf1; regulatory subunit that, together wtih Wdr20, stabilizes Usp12-46. The Usp12-46 deubiquitylase complex associates with arr/arrow; the interaction leads to deubiquitination and stabilization of arr/arrow.

Its function is as follows. Regulatory component of the Usp12-46 deubiquitylase complex. activates deubiquitination by increasing the catalytic turnover without increasing the affinity of deubiquitinating enzymes for the substrate. The complex deubiquitylates the wg/wingless-signaling receptor arr/arrow, which stabilizes the receptor and increases its concentration at the cell surface; this enhances the sensitivity of cells to wg/wingless-signal stimulation. This increases the amplitude and spatial range of the signaling response to the wg/wingless morphogen gradient, facilitating the precise concentration-dependent regulation of its target genes. Together with Wdr20 and Usp12-46 required for wg/wingless-mediated signaling in the wing imaginal disc and for wg/wingless-dependent regulation of intestinal stem cell proliferation. In Drosophila virilis (Fruit fly), this protein is WD repeat-containing protein 48 homolog.